The following is a 135-amino-acid chain: Large ribosomal subunit protein uL16c (135 aa).

The protein belongs to the universal ribosomal protein uL16 family. Part of the 50S ribosomal subunit.

It localises to the plastid. It is found in the chloroplast. This is Large ribosomal subunit protein uL16c from Lepidium virginicum (Virginia pepperweed).